Here is a 153-residue protein sequence, read N- to C-terminus: Ribosomal RNA large subunit methyltransferase H (153 aa).

S-adenosyl-L-methionine contacts are provided by residues Leu70, Gly102, and 121–126; that span reads LSRMTF.

It belongs to the RNA methyltransferase RlmH family. As to quaternary structure, homodimer.

The protein localises to the cytoplasm. The catalysed reaction is pseudouridine(1915) in 23S rRNA + S-adenosyl-L-methionine = N(3)-methylpseudouridine(1915) in 23S rRNA + S-adenosyl-L-homocysteine + H(+). Specifically methylates the pseudouridine at position 1915 (m3Psi1915) in 23S rRNA. The polypeptide is Ribosomal RNA large subunit methyltransferase H (Geotalea daltonii (strain DSM 22248 / JCM 15807 / FRC-32) (Geobacter daltonii)).